Reading from the N-terminus, the 184-residue chain is Cytidylate kinase (184 aa).

Gly-8–Thr-16 is an ATP binding site.

The protein belongs to the cytidylate kinase family. Type 2 subfamily.

It is found in the cytoplasm. It carries out the reaction CMP + ATP = CDP + ADP. The catalysed reaction is dCMP + ATP = dCDP + ADP. The sequence is that of Cytidylate kinase from Pyrobaculum arsenaticum (strain DSM 13514 / JCM 11321 / PZ6).